Consider the following 291-residue polypeptide: Meiosis-specific protein SPO13 (291 aa).

3 disordered regions span residues 1–30, 116–143, and 271–291; these read MAPRKRFRLLELGSPTHSKRKVQKPLQEKT, SFDNSLRFEDIEQPPKSTSTPVLSQSSQ, and CSDYESSGQNATYNDSESSLN. Positions 3–6 match the Nuclear localization signal motif; it reads PRKR. Positions 116 to 125 are enriched in basic and acidic residues; that stretch reads SFDNSLRFED. A compositionally biased stretch (polar residues) spans 130–143; the sequence is PKSTSTPVLSQSSQ.

It is found in the nucleus. Functionally, required for meiosis I segmentation. Probably acts as a regulator of kinetochore function during meiosis I: required both for mono-orientation of kinetochores on sister chromosomes and protection of centromeric cohesin from separase-mediated cleavage. The chain is Meiosis-specific protein SPO13 (SPO13) from Saccharomyces cerevisiae (strain ATCC 204508 / S288c) (Baker's yeast).